A 138-amino-acid polypeptide reads, in one-letter code: ATP synthase epsilon chain (138 aa).

The protein belongs to the ATPase epsilon chain family. F-type ATPases have 2 components, CF(1) - the catalytic core - and CF(0) - the membrane proton channel. CF(1) has five subunits: alpha(3), beta(3), gamma(1), delta(1), epsilon(1). CF(0) has three main subunits: a, b and c.

It localises to the cell inner membrane. Its function is as follows. Produces ATP from ADP in the presence of a proton gradient across the membrane. This is ATP synthase epsilon chain from Cupriavidus pinatubonensis (strain JMP 134 / LMG 1197) (Cupriavidus necator (strain JMP 134)).